Reading from the N-terminus, the 86-residue chain is Small ribosomal subunit protein bS16 (86 aa).

It belongs to the bacterial ribosomal protein bS16 family.

This chain is Small ribosomal subunit protein bS16, found in Stenotrophomonas maltophilia (strain R551-3).